The following is a 132-amino-acid chain: Transcription antitermination protein NusB (132 aa).

This sequence belongs to the NusB family.

Involved in transcription antitermination. Required for transcription of ribosomal RNA (rRNA) genes. Binds specifically to the boxA antiterminator sequence of the ribosomal RNA (rrn) operons. This chain is Transcription antitermination protein NusB, found in Campylobacter jejuni subsp. jejuni serotype O:6 (strain 81116 / NCTC 11828).